The chain runs to 371 residues: 4-hydroxy-3-methylbut-2-en-1-yl diphosphate synthase (flavodoxin) (371 aa).

[4Fe-4S] cluster contacts are provided by C270, C273, C305, and E312.

The protein belongs to the IspG family. [4Fe-4S] cluster serves as cofactor.

The enzyme catalyses (2E)-4-hydroxy-3-methylbut-2-enyl diphosphate + oxidized [flavodoxin] + H2O + 2 H(+) = 2-C-methyl-D-erythritol 2,4-cyclic diphosphate + reduced [flavodoxin]. It participates in isoprenoid biosynthesis; isopentenyl diphosphate biosynthesis via DXP pathway; isopentenyl diphosphate from 1-deoxy-D-xylulose 5-phosphate: step 5/6. Its function is as follows. Converts 2C-methyl-D-erythritol 2,4-cyclodiphosphate (ME-2,4cPP) into 1-hydroxy-2-methyl-2-(E)-butenyl 4-diphosphate. In Shewanella baltica (strain OS223), this protein is 4-hydroxy-3-methylbut-2-en-1-yl diphosphate synthase (flavodoxin).